The following is a 251-amino-acid chain: Triosephosphate isomerase (251 aa).

9 to 11 (NWK) serves as a coordination point for substrate. The active-site Electrophile is histidine 93. The active-site Proton acceptor is the glutamate 163. Substrate-binding positions include glycine 169, serine 209, and 230 to 231 (GG).

It belongs to the triosephosphate isomerase family. As to quaternary structure, homodimer.

It is found in the cytoplasm. The enzyme catalyses D-glyceraldehyde 3-phosphate = dihydroxyacetone phosphate. It participates in carbohydrate biosynthesis; gluconeogenesis. It functions in the pathway carbohydrate degradation; glycolysis; D-glyceraldehyde 3-phosphate from glycerone phosphate: step 1/1. Functionally, involved in the gluconeogenesis. Catalyzes stereospecifically the conversion of dihydroxyacetone phosphate (DHAP) to D-glyceraldehyde-3-phosphate (G3P). This Ruegeria pomeroyi (strain ATCC 700808 / DSM 15171 / DSS-3) (Silicibacter pomeroyi) protein is Triosephosphate isomerase.